The chain runs to 455 residues: 3-isopropylmalate dehydratase large subunit (455 aa).

Residues cysteine 336, cysteine 396, and cysteine 399 each coordinate [4Fe-4S] cluster.

The protein belongs to the aconitase/IPM isomerase family. LeuC type 1 subfamily. Heterodimer of LeuC and LeuD. [4Fe-4S] cluster serves as cofactor.

The catalysed reaction is (2R,3S)-3-isopropylmalate = (2S)-2-isopropylmalate. It participates in amino-acid biosynthesis; L-leucine biosynthesis; L-leucine from 3-methyl-2-oxobutanoate: step 2/4. Its function is as follows. Catalyzes the isomerization between 2-isopropylmalate and 3-isopropylmalate, via the formation of 2-isopropylmaleate. The chain is 3-isopropylmalate dehydratase large subunit from Staphylococcus aureus (strain MRSA252).